Reading from the N-terminus, the 332-residue chain is Transcription initiation factor IIB 2 (332 aa).

Residues 1–10 (MSDTITTRTY) show a composition bias toward polar residues. A disordered region spans residues 1–36 (MSDTITTRTYSADAKSRDVRPRESERDETQQDETQV). The span at 14–29 (AKSRDVRPRESERDET) shows a compositional bias: basic and acidic residues. A TFIIB-type zinc finger spans residues 33–63 (ETQVCPECSGHLVTDEEHGETICEDCGLVVE). Cys-37, Cys-40, Cys-55, and Cys-58 together coordinate Zn(2+). Positions 77–106 (DSAERDSKSRVGAPTTKMMHDKGLSTNIGW) are disordered. Tandem repeats lie at residues 149 to 232 (GEID…VREL) and 243 to 324 (QYVP…ELLE).

The protein belongs to the TFIIB family.

Functionally, stabilizes TBP binding to an archaeal box-A promoter. Also responsible for recruiting RNA polymerase II to the pre-initiation complex (DNA-TBP-TFIIB). This chain is Transcription initiation factor IIB 2, found in Haloferax volcanii (strain ATCC 29605 / DSM 3757 / JCM 8879 / NBRC 14742 / NCIMB 2012 / VKM B-1768 / DS2) (Halobacterium volcanii).